A 556-amino-acid polypeptide reads, in one-letter code: Man(5)GlcNAc(2)-PP-dolichol translocation protein RFT1 (556 aa).

The next 12 membrane-spanning stretches (helical) occupy residues 10–30, 41–61, 91–111, 129–149, 156–176, 184–204, 353–373, 389–409, 440–460, 461–477, 489–509, and 517–537; these read LLGA…TFGI, EVLG…LFLS, LTVP…LNWL, VAFS…AQVF, ILLN…IVTG, AFAI…YGFF, SVLN…FTFG, FVAG…IYLL, VSFL…GFIF, ANCI…TYYI, LLGL…GIVC, and LATH…SWAL.

Belongs to the RFT1 family.

The protein localises to the endoplasmic reticulum membrane. It participates in protein modification; protein glycosylation. Functionally, intramembrane glycolipid transporter that operates in the biosynthetic pathway of dolichol-linked oligosaccharides, the glycan precursors employed in protein asparagine (N)-glycosylation. The sequential addition of sugars to dolichol pyrophosphate produces dolichol-linked oligosaccharides containing fourteen sugars, including two GlcNAcs, nine mannoses and three glucoses. Once assembled, the oligosaccharide is transferred from the lipid to nascent proteins by oligosaccharyltransferases. The assembly of dolichol-linked oligosaccharides begins on the cytosolic side of the endoplasmic reticulum membrane and finishes in its lumen. RFT1 could mediate the translocation of the cytosolically oriented intermediate DolPP-GlcNAc2Man5, produced by ALG11, into the ER lumen where dolichol-linked oligosaccharides assembly continues. However, the intramembrane lipid transporter activity could not be confirmed in vitro. The polypeptide is Man(5)GlcNAc(2)-PP-dolichol translocation protein RFT1 (Drosophila melanogaster (Fruit fly)).